The sequence spans 340 residues: Phosphate acyltransferase (340 aa).

It belongs to the PlsX family. In terms of assembly, homodimer. Probably interacts with PlsY.

Its subcellular location is the cytoplasm. It carries out the reaction a fatty acyl-[ACP] + phosphate = an acyl phosphate + holo-[ACP]. Its pathway is lipid metabolism; phospholipid metabolism. Its function is as follows. Catalyzes the reversible formation of acyl-phosphate (acyl-PO(4)) from acyl-[acyl-carrier-protein] (acyl-ACP). This enzyme utilizes acyl-ACP as fatty acyl donor, but not acyl-CoA. In Clostridioides difficile (strain 630) (Peptoclostridium difficile), this protein is Phosphate acyltransferase.